A 492-amino-acid polypeptide reads, in one-letter code: 3-octaprenyl-4-hydroxybenzoate carboxy-lyase (492 aa).

Asn175 lines the Mn(2+) pocket. Residues 178–180 (IYR), 192–194 (RWL), and 197–198 (RG) contribute to the prenylated FMN site. Residue Glu241 participates in Mn(2+) binding. Asp290 serves as the catalytic Proton donor.

This sequence belongs to the UbiD family. In terms of assembly, homohexamer. Prenylated FMN is required as a cofactor. It depends on Mn(2+) as a cofactor.

The protein localises to the cell membrane. It carries out the reaction a 4-hydroxy-3-(all-trans-polyprenyl)benzoate + H(+) = a 2-(all-trans-polyprenyl)phenol + CO2. The protein operates within cofactor biosynthesis; ubiquinone biosynthesis. Functionally, catalyzes the decarboxylation of 3-octaprenyl-4-hydroxy benzoate to 2-octaprenylphenol, an intermediate step in ubiquinone biosynthesis. This chain is 3-octaprenyl-4-hydroxybenzoate carboxy-lyase, found in Salmonella typhimurium (strain LT2 / SGSC1412 / ATCC 700720).